A 41-amino-acid polypeptide reads, in one-letter code: uncharacterized protein (41 aa).

Residues 1 to 12 (MTRNVVRQEFEA) show a composition bias toward basic and acidic residues. A disordered region spans residues 1-23 (MTRNVVRQEFEAPGKPQDSSQQD).

This is an uncharacterized protein from Homo sapiens (Human).